The following is a 559-amino-acid chain: 5-epiaristolochene synthase (559 aa).

Mg(2+)-binding residues include Asp-312, Asp-316, Asp-455, Thr-459, and Glu-463. The DDXXD motif motif lies at 312–316 (DDTYD).

Belongs to the terpene synthase family. As to quaternary structure, monomer. Mg(2+) serves as cofactor. As to expression, expressed only in treated leaves an not detected in control leaves.

It localises to the cytoplasm. The catalysed reaction is (2E,6E)-farnesyl diphosphate = (+)-5-epi-aristolochene + diphosphate. It participates in secondary metabolite biosynthesis; terpenoid biosynthesis. Its function is as follows. Catalyzes the cyclization of trans,trans-farnesyl diphosphate (FPP) to the bicyclic intermediate 5-epi-aristolochene, initial step in the conversion of FPP to the sesquiterpenoid antifungal phytoalexin capsidiol. Produces germacrene A as an enzyme-bound intermediate that is not released by the enzyme, but is further cyclized to produce the bicyclic 5-epi-aristolochene. In Capsicum annuum (Capsicum pepper), this protein is 5-epiaristolochene synthase (EAS).